The following is a 346-amino-acid chain: Phosphoribosylformylglycinamidine cyclo-ligase (346 aa).

The protein belongs to the AIR synthase family.

The protein localises to the cytoplasm. It carries out the reaction 2-formamido-N(1)-(5-O-phospho-beta-D-ribosyl)acetamidine + ATP = 5-amino-1-(5-phospho-beta-D-ribosyl)imidazole + ADP + phosphate + H(+). Its pathway is purine metabolism; IMP biosynthesis via de novo pathway; 5-amino-1-(5-phospho-D-ribosyl)imidazole from N(2)-formyl-N(1)-(5-phospho-D-ribosyl)glycinamide: step 2/2. The protein is Phosphoribosylformylglycinamidine cyclo-ligase of Bacillus cereus (strain ATCC 10987 / NRS 248).